The sequence spans 515 residues: MPKERRSRRRPQPIIRWVSLTLTLLALCQPIQTWRCSLSLGNQQWMTTYNQEAKFFISIDQILEAHNQSPFCPRSPRYTLDFVNGYPKIYWPPPQGRRRFGARAMVTYDCEPRCPYVGADHFDCPHWDNASQADQGSFYVNHQTLFLHLKQCHGIFTLTWEIWGYDPLITFSLHKIPDPPQPDFPQLNSDWVPSVRSWALLLNQTARAFPDCAICWEPSPPWAPEILVYNKTISSSGPGLALPDAQIFWVNTSLFNTTQGWHHPSQRLLFNVSQGNALLLPPISLVNLSTASSAPPTRVRRSPVAALTLGLALSVGLTGINVAVSALSHQRLTSLIHVLEQDQQRLITAINQTHYNLLNVASVVAQNRRGLDWLYIRLGFQSLCPTINEPCCFLRIQNDSIIRLGDLQPLSQRVSTDWQWPWNWDLGLTAWVRETIHSVLSLFLLALFLLFLAPCLIKCLTSRLLKLLRQAPHFPEISFPPKPDSDYQALLPSAPEIYSHLSPTKPDYINLRPCP.

A signal peptide spans M1–T33. At W34 to T435 the chain is on the extracellular side. N129 and N203 each carry an N-linked (GlcNAc...) asparagine; by host glycan. Residues C212–C215 carry the CXXC motif. Intrachain disulfides connect C212-C215, C212-C392, and C384-C391. N230, N251, N256, N271, and N287 each carry an N-linked (GlcNAc...) asparagine; by host glycan. Residues V304–V324 form a fusion peptide region. Coiled-coil stretches lie at residues Q330 to I376 and N388 to W420. N351 carries an N-linked (GlcNAc...) asparagine; by host glycan. The tract at residues A365–Q381 is immunosuppression. The CX6CC motif lies at C384–C392. An N-linked (GlcNAc...) asparagine; by host glycan is attached at N398. A helical membrane pass occupies residues I436–L456. The S-palmitoyl cysteine; by host moiety is linked to residue C455. The Cytoplasmic segment spans residues I457–P515.

As to quaternary structure, the mature envelope protein (Env) consists of a trimer of SU-TM heterodimers attached by a labile interchain disulfide bond. In terms of processing, specific enzymatic cleavages in vivo yield mature proteins. Envelope glycoproteins are synthesized as an inactive precursor that is N-glycosylated and processed likely by host cell furin or by a furin-like protease in the Golgi to yield the mature SU and TM proteins. The cleavage site between SU and TM requires the minimal sequence [KR]-X-[KR]-R. The CXXC motif is highly conserved across a broad range of retroviral envelope proteins. It is thought to participate in the formation of a labile disulfide bond possibly with the CX6CC motif present in the transmembrane protein. Isomerization of the intersubunit disulfide bond to an SU intrachain disulfide bond is thought to occur upon receptor recognition in order to allow membrane fusion. Post-translationally, the transmembrane protein is palmitoylated.

Its subcellular location is the virion membrane. It is found in the host cell membrane. The surface protein (SU) attaches the virus to the host cell by binding to its receptor. This interaction triggers the refolding of the transmembrane protein (TM) and is thought to activate its fusogenic potential by unmasking its fusion peptide. Fusion occurs at the host cell plasma membrane. Its function is as follows. The transmembrane protein (TM) acts as a class I viral fusion protein. Under the current model, the protein has at least 3 conformational states: pre-fusion native state, pre-hairpin intermediate state, and post-fusion hairpin state. During viral and target cell membrane fusion, the coiled coil regions (heptad repeats) assume a trimer-of-hairpins structure, positioning the fusion peptide in close proximity to the C-terminal region of the ectodomain. The formation of this structure appears to drive apposition and subsequent fusion of viral and target cell membranes. Membranes fusion leads to delivery of the nucleocapsid into the cytoplasm. The chain is Envelope glycoprotein (env) from Bovine leukemia virus (isolate Belgium LB59) (BLV).